A 729-amino-acid chain; its full sequence is MTDFDKIFEGAIPEGKEPVALFREVYHGAITATSYAEILLNQAIRTYGPDHPVGYPDTAYYLPVIRCFSGEEVKKLGDLPPILNRKRAQVSPVLNFENARLAGEATWYAAEIIEALRYLKYKPDEPLLPPPWTGFIGDPVVRRFGIKMVDWTIPGEAIILGRAKDSKALAKIVKELMGMGFMLFICDEAVEQLLEENVKLGIDYIAYPLGNFTQIVHAANYALRAGMMFGGVTPGAREEQRDYQRRRIRAFVLYLGEHDMVKTAAAFGAIFTGFPVITDQPLPEDKQIPDWFFSVEDYDKIVQIAMETRGIKLTKIKLDLPINFGPAFEGESIRKGDMYVEMGGNRTPAFELVRTVSESEITDGKIEVIGPDIDQIPEGSKLPLGILVDIYGRKMQADFEGVLERRIHDFINYGEGLWHTGQRNINWLRVSKDAVAKGFRFKNYGEILVAKMKEEFPAIVDRVQVTIFTDEAKVKEYMEVAREKYKERDDRMRGLTDETVDTFYSCVLCQSFAPNHVCIVTPERVGLCGAVSWLDAKASYEINHAGPNQPIPKEGEIDPIKGIWKSVNDYLYTASNRNLEQVCLYTLMENPMTSCGCFEAIMAILPECNGIMITTRDHAGMTPSGMTFSTLAGMIGGGTQTPGFMGIGRTYIVSKKFISADGGIARIVWMPKSLKDFLHDEFVRRSVEEGLGEDFIDKIADETIGTTVDEILPYLEEKGHPALTMDPIM.

[4Fe-4S] cluster is bound by residues cysteine 506, cysteine 509, cysteine 518, and cysteine 528. Cysteine 509 contributes to the Ni(2+) binding site. The Ni(2+) site is built by cysteine 595, glycine 596, and cysteine 597.

As to quaternary structure, tetramer of two alpha and two beta chains. Ni cation is required as a cofactor. [4Fe-4S] cluster serves as cofactor.

The catalysed reaction is Co(I)-[corrinoid Fe-S protein] + acetyl-CoA + H(+) = methyl-Co(III)-[corrinoid Fe-S protein] + CO + CoA. Its function is as follows. The beta subunit generates CO from CO(2), while the alpha subunit (this protein) combines the CO with CoA and a methyl group to form acetyl-CoA. The methyl group, which is incorporated into acetyl-CoA, is transferred to the alpha subunit by a corrinoid iron-sulfur protein. The chain is Carbon monoxide dehydrogenase/acetyl-CoA synthase subunit alpha from Moorella thermoacetica (Clostridium thermoaceticum).